The sequence spans 732 residues: Zinc/cadmium/lead-transporting P-type ATPase (732 aa).

Over 1 to 124 the chain is Cytoplasmic; sequence MSTPDNHGKK…QAAEEPQASR (124 aa). Residues 48–112 enclose the HMA domain; it reads TRYSWKVSGM…ALQKAGYSLR (65 aa). Zn(2+) contacts are provided by Asp58, Cys59, and Cys62. The chain crosses the membrane as a helical span at residues 125–145; the sequence is LKENLPLITLIVMMAISWGLE. Gln146 is a topological domain (periplasmic). A helical transmembrane segment spans residues 147-167; the sequence is FNHPFGQLAFIATTLVGLYPI. The Cytoplasmic segment spans residues 168 to 179; it reads ARQALRLIKSGS. The helical transmembrane segment at 180–197 threads the bilayer; that stretch reads YFAIETLMSVAAIGALFI. Residues 198–202 are Periplasmic-facing; sequence GATAE. Residues 203-222 traverse the membrane as a helical segment; sequence AAMVLLLFLIGERLEGWAAS. Residues 223–356 lie on the Cytoplasmic side of the membrane; that stretch reads RARQGVSALM…IDRFSRIYTP (134 aa). Residues 357-377 form a helical membrane-spanning segment; it reads AIMAVALLVTLVPPLLFAASW. Over 378 to 383 the chain is Periplasmic; that stretch reads QEWIYK. Residues 384-404 traverse the membrane as a helical segment; the sequence is GLTLLLIGCPCALVISTPAAI. Zn(2+) is bound by residues Cys392 and Cys394. Residues 405-685 are Cytoplasmic-facing; it reads TSGLAAAARR…RATHANIRQN (281 aa). Asp436 functions as the 4-aspartylphosphate intermediate in the catalytic mechanism. Mg(2+) contacts are provided by Asp436, Thr438, and Asp628. The chain crosses the membrane as a helical span at residues 686 to 702; sequence ITIALGLKGIFLVTTLL. Over 703–707 the chain is Periplasmic; sequence GMTGL. Residues 708-729 form a helical membrane-spanning segment; the sequence is WLAVLADTGATVLVTANALRLL. Asp714 is a binding site for Zn(2+). Over 730 to 732 the chain is Cytoplasmic; the sequence is RRR.

This sequence belongs to the cation transport ATPase (P-type) (TC 3.A.3) family. Type IB subfamily.

It localises to the cell inner membrane. The enzyme catalyses Pb(2+)(in) + ATP + H2O = Pb(2+)(out) + ADP + phosphate + H(+). The catalysed reaction is Zn(2+)(in) + ATP + H2O = Zn(2+)(out) + ADP + phosphate + H(+). It catalyses the reaction Cd(2+)(in) + ATP + H2O = Cd(2+)(out) + ADP + phosphate + H(+). With respect to regulation, inhibited by orthovanadate. Its function is as follows. Confers resistance to zinc, cadmium and lead. Couples the hydrolysis of ATP with the export of zinc, cadmium or lead, with highest activity when the metals are present as metal-thiolate complexes. Can also bind nickel, copper, cobalt and mercury. The polypeptide is Zinc/cadmium/lead-transporting P-type ATPase (Escherichia coli (strain K12)).